Consider the following 174-residue polypeptide: 2-hydroxy-palmitic acid dioxygenase MPO1 (174 aa).

Residues 1–23 are Cytoplasmic-facing; the sequence is MGEGLLDLRSQLGFYKFYHHNPK. A helical transmembrane segment spans residues 24–44; the sequence is NVLIHSIFVPTILFSGSCMLH. Residues 45-63 lie on the Lumenal side of the membrane; sequence RVKIYQSISLTAVLSVLFS. Residues 64–84 form a helical membrane-spanning segment; that stretch reads IFYCLLYLPTGLLAGVLLLLL. At 85 to 98 the chain is on the cytoplasmic side; it reads NLALIDHRVDLTFK. A helical membrane pass occupies residues 99–119; it reads QELGLFTIGWIFQFVGHGVFE. The Lumenal segment spans residues 120-131; the sequence is KRRPALIDNLVQ. Residues 132–152 form a helical membrane-spanning segment; it reads SLVLAPYFIMFEFLFKLGFMP. Over 153–174 the chain is Cytoplasmic; sequence RLKATLEHDLEIKQRNLRMQRQ.

It belongs to the MPO1 family. It depends on Fe(2+) as a cofactor.

The protein resides in the endoplasmic reticulum membrane. The enzyme catalyses (R)-2-hydroxyhexadecanoate + O2 = pentadecanoate + CO2 + H2O. Dioxygenase that catalyzes the alpha-oxidation of 2-hydroxy fatty acids in an iron-dependent manner. Involved in metabolism of phytosphingosine and is required for proper endoplasmic reticulum stress response. In Saccharomyces cerevisiae (strain ATCC 204508 / S288c) (Baker's yeast), this protein is 2-hydroxy-palmitic acid dioxygenase MPO1.